Reading from the N-terminus, the 323-residue chain is Tumor-associated calcium signal transducer 2 (323 aa).

Residues 1-26 (MARGPGLAPPPLRLPLLLLVLAAVTG) form the signal peptide. Residues 27-274 (HTAAQDNCTC…PPKFSMKRLT (248 aa)) are Extracellular-facing. Residue Asn-33 is glycosylated (N-linked (GlcNAc...) asparagine). Residues 70 to 145 (TSKCLLLKAR…TDKGDLSLRC (76 aa)) enclose the Thyroglobulin type-1 domain. 3 cysteine pairs are disulfide-bonded: Cys-73-Cys-108, Cys-119-Cys-125, and Cys-127-Cys-145. The N-linked (GlcNAc...) asparagine glycan is linked to Asn-120. N-linked (GlcNAc...) asparagine glycosylation is found at Asn-168 and Asn-208. Residues 275-297 (AGLIAVIVVVVVALVAGMAVLVI) traverse the membrane as a helical segment. The Cytoplasmic portion of the chain corresponds to 298–323 (TNRRKSGKYKKVEIKELGELRKEPSL).

This sequence belongs to the EPCAM family. In terms of processing, the N-terminus is blocked. Placenta, pancreatic carcinoma cell lines.

It localises to the membrane. In terms of biological role, may function as a growth factor receptor. This Homo sapiens (Human) protein is Tumor-associated calcium signal transducer 2 (TACSTD2).